The following is a 341-amino-acid chain: Guanine nucleotide-binding protein subunit beta (341 aa).

WD repeat units lie at residues 54-93 (GHLAKIYAMHWASDSRNLVSASQDGKLIVWDGYTTNKVHA), 96-135 (LRSSWVMTCAYAPSGSYVACGGLDNICSIYSLKTREGNVR), 142-180 (GHTGYLSCCRFLDDNQIVTSSGDMSCALWDIETGQQTTA), 183-222 (GHTGDVMSLSLSPDMRTFVSGACDASAKLWDIRDGMCKQT), 225-264 (GHESDINAITYFPNGYAFATGSDDATCRLFDIRADQEIGM), 269-308 (NIICGITSVAFSKSGRLLLGGYDDFNCNVWDVLRQERAGV), and 311-341 (GHDNRVSCLGVTEDGMAVATGSWDSFLRIWN).

This sequence belongs to the WD repeat G protein beta family. G proteins are composed of 3 units, alpha, beta and gamma. The G protein beta1-gamma2 dimer interacts with calmodulin. As to expression, abundantly expressed in gills, gonad and mantle and at lower levels in digestion gland. Not detected in muscle.

It localises to the cytoplasm. In terms of biological role, guanine nucleotide-binding proteins (G proteins) are involved as a modulator or transducer in various transmembrane signaling systems. The beta and gamma chains are required for the GTPase activity, for replacement of GDP by GTP, and for G protein-effector interaction. In Pinctada fucata (Akoya pearl oyster), this protein is Guanine nucleotide-binding protein subunit beta.